Reading from the N-terminus, the 402-residue chain is Ketol-acid reductoisomerase, mitochondrial (402 aa).

The transit peptide at 1-26 (MAARNCTKALRPLARQLATPAVQRRT) directs the protein to the mitochondrion. Residues 63 to 252 (KEEVHERADW…AVGSGYLYET (190 aa)) form the KARI N-terminal Rossmann domain. NADP(+) contacts are provided by residues 90 to 99 (GYGSQGHGQG), 114 to 119 (RKNGKS), and 152 to 156 (SDAAQ). His177 is a catalytic residue. Residues 253–400 (TFEKEVYSDL…KAVRSLRPEN (148 aa)) form the KARI C-terminal knotted domain. 4 residues coordinate Mg(2+): Asp261, Glu265, Glu297, and Glu301. Ser323 is a substrate binding site.

Belongs to the ketol-acid reductoisomerase family. The cofactor is Mg(2+).

It is found in the mitochondrion. The enzyme catalyses (2R)-2,3-dihydroxy-3-methylbutanoate + NADP(+) = (2S)-2-acetolactate + NADPH + H(+). It carries out the reaction (2R,3R)-2,3-dihydroxy-3-methylpentanoate + NADP(+) = (S)-2-ethyl-2-hydroxy-3-oxobutanoate + NADPH + H(+). Its pathway is amino-acid biosynthesis; L-isoleucine biosynthesis; L-isoleucine from 2-oxobutanoate: step 2/4. The protein operates within amino-acid biosynthesis; L-valine biosynthesis; L-valine from pyruvate: step 2/4. The protein is Ketol-acid reductoisomerase, mitochondrial (ilv-2) of Neurospora crassa (strain ATCC 24698 / 74-OR23-1A / CBS 708.71 / DSM 1257 / FGSC 987).